Reading from the N-terminus, the 102-residue chain is Small ribosomal subunit protein uS10 (102 aa).

Belongs to the universal ribosomal protein uS10 family. In terms of assembly, part of the 30S ribosomal subunit.

In terms of biological role, involved in the binding of tRNA to the ribosomes. In Latilactobacillus sakei subsp. sakei (strain 23K) (Lactobacillus sakei subsp. sakei), this protein is Small ribosomal subunit protein uS10.